The sequence spans 183 residues: ATP-dependent protease subunit HslV (183 aa).

The active site involves Thr13. Na(+)-binding residues include Gly168, Cys171, and Thr174.

This sequence belongs to the peptidase T1B family. HslV subfamily. In terms of assembly, a double ring-shaped homohexamer of HslV is capped on each side by a ring-shaped HslU homohexamer. The assembly of the HslU/HslV complex is dependent on binding of ATP.

Its subcellular location is the cytoplasm. The enzyme catalyses ATP-dependent cleavage of peptide bonds with broad specificity.. Allosterically activated by HslU binding. Protease subunit of a proteasome-like degradation complex believed to be a general protein degrading machinery. The polypeptide is ATP-dependent protease subunit HslV (Xanthomonas euvesicatoria pv. vesicatoria (strain 85-10) (Xanthomonas campestris pv. vesicatoria)).